A 293-amino-acid chain; its full sequence is 1D-myo-inositol 2-acetamido-2-deoxy-alpha-D-glucopyranoside deacetylase (293 aa).

Positions 15, 18, and 148 each coordinate Zn(2+).

Belongs to the MshB deacetylase family. The cofactor is Zn(2+).

It catalyses the reaction 1D-myo-inositol 2-acetamido-2-deoxy-alpha-D-glucopyranoside + H2O = 1D-myo-inositol 2-amino-2-deoxy-alpha-D-glucopyranoside + acetate. Catalyzes the deacetylation of 1D-myo-inositol 2-acetamido-2-deoxy-alpha-D-glucopyranoside (GlcNAc-Ins) in the mycothiol biosynthesis pathway. The chain is 1D-myo-inositol 2-acetamido-2-deoxy-alpha-D-glucopyranoside deacetylase from Corynebacterium diphtheriae (strain ATCC 700971 / NCTC 13129 / Biotype gravis).